A 301-amino-acid polypeptide reads, in one-letter code: Homoserine O-acetyltransferase (301 aa).

Cysteine 142 (acyl-thioester intermediate) is an active-site residue. Positions 163 and 192 each coordinate substrate. Catalysis depends on histidine 235, which acts as the Proton acceptor. Glutamate 237 is an active-site residue. Arginine 249 contributes to the substrate binding site.

It belongs to the MetA family.

It is found in the cytoplasm. The catalysed reaction is L-homoserine + acetyl-CoA = O-acetyl-L-homoserine + CoA. Its pathway is amino-acid biosynthesis; L-methionine biosynthesis via de novo pathway; O-acetyl-L-homoserine from L-homoserine: step 1/1. Transfers an acetyl group from acetyl-CoA to L-homoserine, forming acetyl-L-homoserine. The polypeptide is Homoserine O-acetyltransferase (Bacillus cereus (strain AH187)).